Here is a 185-residue protein sequence, read N- to C-terminus: Phosphatidylglycerophosphatase GEP4, mitochondrial (185 aa).

Residues 45 to 49 carry the Phosphoryl acceptor motif; the sequence is DKDNC.

Belongs to the GEP4 family.

It is found in the mitochondrion inner membrane. The catalysed reaction is a 1,2-diacyl-sn-glycero-3-phospho-(1'-sn-glycero-3'-phosphate) + H2O = a 1,2-diacyl-sn-glycero-3-phospho-(1'-sn-glycerol) + phosphate. Its pathway is phospholipid metabolism; phosphatidylglycerol biosynthesis; phosphatidylglycerol from CDP-diacylglycerol: step 2/2. Functionally, phosphatidylglycerophosphatase involved in the biosynthesis of cardiolipin (CL), a unique dimeric phosphoglycerolipid predominantly present in mitochondrial membranes and which has important functions for cellular energy metabolism, mitochondrial dynamics and the initiation of apoptotic pathways. Required for the stability of respiratory chain supercomplexes and for growth at elevated temperature, in presence of ethidium bromide or in absence of prohibitins. This chain is Phosphatidylglycerophosphatase GEP4, mitochondrial (GEP4), found in Saccharomyces cerevisiae (strain ATCC 204508 / S288c) (Baker's yeast).